Here is a 1070-residue protein sequence, read N- to C-terminus: [F-actin]-monooxygenase MICAL1 (1070 aa).

Residues 1–489 are monooxygenase domain; that stretch reads MASTISTNPA…RDLYDMEAKE (489 aa). Residues Cys-95, 114–116, 121–123, Phe-181, Tyr-293, and Asp-393 contribute to the FAD site; these read EKR and RHN. Thr-475 carries the post-translational modification Phosphothreonine. A Calponin-homology (CH) domain is found at 508–612; it reads VGSQEELLRW…YLSHFHSAFK (105 aa). A disordered region spans residues 643 to 690; sequence QRTRTQENGEDAGGKKPRLEVKAETPSTEEPPVPKPDEPMTPPSQQQD. Positions 646 to 665 are enriched in basic and acidic residues; the sequence is RTQENGEDAGGKKPRLEVKA. Residues 671 to 684 are compositionally biased toward pro residues; the sequence is EEPPVPKPDEPMTP. The LIM zinc-binding domain occupies 695-757; that stretch reads DLCALCGQHL…LQHLPQTGHE (63 aa). 8 residues coordinate Zn(2+): Cys-697, Cys-700, His-718, Cys-721, Cys-724, Cys-727, Cys-747, and His-750. Disordered stretches follow at residues 754–838 and 865–887; these read TGHE…RSCS and MEMGEEERSSSSEEETEEEEDVP. A compositionally biased stretch (basic and acidic residues) spans 755–766; the sequence is GHEEDSSDRGPE. Residues 770–781 show a composition bias toward polar residues; that stretch reads LPMSSENNTPSG. A phosphoserine mark is found at Ser-793, Ser-875, and Ser-876. A compositionally biased stretch (acidic residues) spans 876-887; it reads SEEETEEEEDVP. The important for interaction with RAB8A stretch occupies residues 904 to 1070; sequence GTMNNYPTWR…ELASEPGVQG (167 aa). Residues 921–1070 form the bMERB domain; that stretch reads KEEEMKRFCK…ELASEPGVQG (150 aa). A coiled-coil region spans residues 928 to 1030; it reads FCKAQAIQRR…EETLKTAADR (103 aa). Ser-1060 carries the phosphoserine modification.

The protein belongs to the Mical family. Interacts with STK38 and STK38L. Associates with the SH3 domain of NEDD9. Interacts with VIM and PLXNA3. Interacts with RAB1B, RAB8A, RAB10, RAB13 and RAB15 (in their GTP-bound forms); binding to RAB1B is of low affinity compared to other Rab proteins; at least in case of RAB8A and RAB10 can bind 2 molecules of the Rab proteins simultaneously. Interacts with GRAF1/ARHGAP26, GRAF2/ARHGAP10, RAB8A, RAB8B and RAB10; may bind simultaneously to GRAFs and Rabs and connects GRAFs to Rabs. Does not interact with RAB1 and RAB11A. FAD serves as cofactor.

It is found in the cytoplasm. It localises to the cytoskeleton. Its subcellular location is the endosome membrane. The protein localises to the midbody. The catalysed reaction is L-methionyl-[F-actin] + NADPH + O2 + H(+) = L-methionyl-(R)-S-oxide-[F-actin] + NADP(+) + H2O. It catalyses the reaction NADPH + O2 + H(+) = H2O2 + NADP(+). Functionally, monooxygenase that promotes depolymerization of F-actin by mediating oxidation of specific methionine residues on actin to form methionine-sulfoxide, resulting in actin filament disassembly and preventing repolymerization. In the absence of actin, it also functions as a NADPH oxidase producing H(2)O(2). Acts as a cytoskeletal regulator that connects NEDD9 to intermediate filaments. Also acts as a negative regulator of apoptosis via its interaction with STK38 and STK38L; acts by antagonizing STK38 and STK38L activation by MST1/STK4. Involved in regulation of lamina-specific connectivity in the nervous system such as the development of lamina-restricted hippocampal connections. Through redox regulation of the actin cytoskeleton controls the intracellular distribution of secretory vesicles containing L1/neurofascin/NgCAM family proteins in neurons, thereby regulating their cell surface levels. May act as Rab effector protein and play a role in vesicle trafficking. Promotes endosomal tubule extension by associating with RAB8 (RAB8A or RAB8B), RAB10 and GRAF (GRAF1/ARHGAP26 or GRAF2/ARHGAP10) on the endosomal membrane which may connect GRAFs to Rabs, thereby participating in neosynthesized Rab8-Rab10-Rab11-dependent protein export. This chain is [F-actin]-monooxygenase MICAL1 (MICAL1), found in Bos taurus (Bovine).